A 647-amino-acid chain; its full sequence is Epithelial sodium channel subunit beta (647 aa).

Residues M1–M57 lie on the Cytoplasmic side of the membrane. A helical membrane pass occupies residues W58–L78. Residues T79 to G552 are Extracellular-facing. Cystine bridges form between C104/C291, C215/C222, C268/C275, C381/C468, C406/C464, C410/C460, C419/C446, and C421/C435. The helical transmembrane segment at S553–L573 threads the bilayer. The Cytoplasmic portion of the chain corresponds to K574–N647. Residues R586 to N647 form a disordered region.

Belongs to the amiloride-sensitive sodium channel (TC 1.A.6) family. SCNN1B subfamily. Component of the heterotrimeric epithelial sodium channel (ENaC) composed of an alpha/SCNN1A, a beta/SCNN1B and a gamma/SCNN1G subunit.

The protein resides in the apical cell membrane. Its subcellular location is the cytoplasmic vesicle membrane. It carries out the reaction Na(+)(in) = Na(+)(out). With respect to regulation, originally identified and characterized by its inhibition by the diuretic drug amiloride. This is one of the three pore-forming subunits of the heterotrimeric epithelial sodium channel (ENaC), a critical regulator of sodium balance and fluid homeostasis. ENaC operates in epithelial tissues, where it mediates the electrodiffusion of sodium ions from extracellular fluid through the apical membrane of cells, with water following osmotically. This chain is Epithelial sodium channel subunit beta (scnn1b-a), found in Xenopus laevis (African clawed frog).